We begin with the raw amino-acid sequence, 240 residues long: MATLFIADLHLCVEEPAITAGFLRFLAGEARKADALYILGDLFEAWIGDDDPNPLHRQMAAAIKAVSDSGVPCYFIHGNRDFLLGKRFARESGMTLLPEEKVLELYGRRVLIMHGDTLCTDDAGYQAFRAKVHKPWLQMLFLALPLFVRKRIAARMRANSKEANSSKSLAIMDVNQNAVVSAMEKHQVQWLIHGHTHRPAVHELIANQQPAFRVVLGAWHTEGSMVKVTADDVELIHFPF.

5 residues coordinate Mn(2+): aspartate 8, histidine 10, aspartate 41, asparagine 79, and histidine 114. 79–80 (NR) is a substrate binding site. Substrate-binding residues include aspartate 122, serine 160, asparagine 164, lysine 167, and histidine 195. Mn(2+)-binding residues include histidine 195 and histidine 197.

Belongs to the LpxH family. Mn(2+) serves as cofactor.

The protein localises to the cell inner membrane. The catalysed reaction is UDP-2-N,3-O-bis[(3R)-3-hydroxytetradecanoyl]-alpha-D-glucosamine + H2O = 2-N,3-O-bis[(3R)-3-hydroxytetradecanoyl]-alpha-D-glucosaminyl 1-phosphate + UMP + 2 H(+). Its pathway is glycolipid biosynthesis; lipid IV(A) biosynthesis; lipid IV(A) from (3R)-3-hydroxytetradecanoyl-[acyl-carrier-protein] and UDP-N-acetyl-alpha-D-glucosamine: step 4/6. Its function is as follows. Hydrolyzes the pyrophosphate bond of UDP-2,3-diacylglucosamine to yield 2,3-diacylglucosamine 1-phosphate (lipid X) and UMP by catalyzing the attack of water at the alpha-P atom. Involved in the biosynthesis of lipid A, a phosphorylated glycolipid that anchors the lipopolysaccharide to the outer membrane of the cell. The polypeptide is UDP-2,3-diacylglucosamine hydrolase (Shigella boydii serotype 18 (strain CDC 3083-94 / BS512)).